Consider the following 194-residue polypeptide: Ion-translocating oxidoreductase complex subunit A (194 aa).

A run of 6 helical transmembrane segments spans residues 4–24 (LALI…QFLG), 39–59 (IGLS…SYIL), 71–91 (FLRT…TEML), 102–122 (VLGI…VALL), 135–155 (TTQG…FAAL), and 172–192 (AIGM…SGLI).

It belongs to the NqrDE/RnfAE family. The complex is composed of six subunits: RnfA, RnfB, RnfC, RnfD, RnfE and RnfG.

It localises to the cell inner membrane. Functionally, part of a membrane-bound complex that couples electron transfer with translocation of ions across the membrane. This Pseudomonas paraeruginosa (strain DSM 24068 / PA7) (Pseudomonas aeruginosa (strain PA7)) protein is Ion-translocating oxidoreductase complex subunit A.